The following is a 223-amino-acid chain: RNA-free ribonuclease P (223 aa).

It belongs to the HARP family.

The catalysed reaction is Endonucleolytic cleavage of RNA, removing 5'-extranucleotides from tRNA precursor.. In terms of biological role, RNA-free RNase P that catalyzes the removal of the 5'-leader sequence from pre-tRNA to produce the mature 5'-terminus. The chain is RNA-free ribonuclease P from Methanococcus maripaludis (strain C6 / ATCC BAA-1332).